We begin with the raw amino-acid sequence, 580 residues long: MSSSAECRPIGWGGWGPDPNTSPTRAAIKWFADPRSLHHQQCACGLWNARRAMQWVIPAPPRIWIDDQPRMVKLAYILGAVTVFLTSGNAADVSPTSSVAASTTPSAADSLSSLGLSLPAGNVLVGNNETFTASSPYYEPLIDEAWSGNCRLNASCIVTPKSAQEVSLVIQVLSILDTKFSIRSGGHSSSPGFSSIGSNGVLVALERLNTLSISADRKTLTVGPGNRWEAVYQYLEQYNLTVLGGREPVVGVGGFVLGGGLSLFYNTNGLAIDTVTRFQVVTPNGTIVNATPTEHADLYKGLKGGLNNFGIIVEYDLTTNTGIDVWFEVKNYTRAETPALLAAYATYLQNADVRSNVEIQANPAYTVVLYGYLDHVSAPSAFNAFSTVPSVSTVYPPTNASLNEVLLEIGTAGVTGSSWTYTVSFSFKVTNPDFLQESYKTYLEAAASLLPSGVLLEYVPQGIIPNLVTKGQAQNGGNLLGLEATPQVWGEIFAQFPATVSQSTVASAVNDLLAKITSSAESQGVHLPYIFANDAGPDQQVLRGYGEDNLKYIATVAERYDPKGVMQKLQNDAYFVSKEL.

The segment at 1–21 is disordered; sequence MSSSAECRPIGWGGWGPDPNT. The FAD-binding PCMH-type domain maps to 150-322; sequence CRLNASCIVT…VEYDLTTNTG (173 aa). His187 is modified (pros-8alpha-FAD histidine).

It belongs to the oxygen-dependent FAD-linked oxidoreductase family.

The protein operates within secondary metabolite biosynthesis; terpenoid biosynthesis. Its function is as follows. FAD-dependent monooxygenase; part of the gene cluster that mediates the biosynthesis of yanuthone D, a fungal isoprenoid epoxycyclohexenone that acts as an antibiotic against fungi and bacteria. The first step of the pathway is the synthesis of 6-methylsalicylic acid (6-MSA) by the polyketide synthase yanA. 6-MSA is then converted to m-cresol by the decarboxylase yanB. The cytochrome P450 monooxygenase yanC then catalyzes the oxidation of m-cresol to toluquinol. Epoxidation of toluquinol is then performed by the short chain dehydrogenase yanD, with the help of yanE, and a further prenylated by yanG leads to 7-deacetoxyyanuthone A. The next step is the hydroxylation of C-22 of 7-deacetoxyyanuthone A by the cytochrome P450 monooxygenase yanH to yield 22-deacetylyanuthone A. O-Mevalon transferase yanI then attaches mevalon to the hydroxyl group of 22-deacetylyanuthone A to produce yanuthone E. Finally, the FAD-dependent monooxygenase yanF oxidizes the hydroxyl group at C15 of yanuthone E to form yanuthone D. Furthermore, several branching points in the pathway lead to the production of yanuthones F and G from 7-deacetoxyyanuthone A; yanuthones H and I from 22-deacetylyanuthone A; and yanuthone J from yanuthone E. The sequence is that of FAD-dependent monooxygenase yanF from Aspergillus niger (strain ATCC 1015 / CBS 113.46 / FGSC A1144 / LSHB Ac4 / NCTC 3858a / NRRL 328 / USDA 3528.7).